Consider the following 878-residue polypeptide: Alanine--tRNA ligase (878 aa).

Residues His-567, His-571, Cys-669, and His-673 each coordinate Zn(2+).

The protein belongs to the class-II aminoacyl-tRNA synthetase family. It depends on Zn(2+) as a cofactor.

It is found in the cytoplasm. The enzyme catalyses tRNA(Ala) + L-alanine + ATP = L-alanyl-tRNA(Ala) + AMP + diphosphate. Its function is as follows. Catalyzes the attachment of alanine to tRNA(Ala) in a two-step reaction: alanine is first activated by ATP to form Ala-AMP and then transferred to the acceptor end of tRNA(Ala). Also edits incorrectly charged Ser-tRNA(Ala) and Gly-tRNA(Ala) via its editing domain. The protein is Alanine--tRNA ligase of Rickettsia felis (strain ATCC VR-1525 / URRWXCal2) (Rickettsia azadi).